Reading from the N-terminus, the 601-residue chain is Elongation factor 4 (601 aa).

In terms of domain architecture, tr-type G spans 7–189 (DNIRNFSIVA…AIVKRLPAPK (183 aa)). GTP is bound by residues 19–24 (DHGKST) and 136–139 (NKVD).

Belongs to the TRAFAC class translation factor GTPase superfamily. Classic translation factor GTPase family. LepA subfamily.

Its subcellular location is the cell inner membrane. It catalyses the reaction GTP + H2O = GDP + phosphate + H(+). Functionally, required for accurate and efficient protein synthesis under certain stress conditions. May act as a fidelity factor of the translation reaction, by catalyzing a one-codon backward translocation of tRNAs on improperly translocated ribosomes. Back-translocation proceeds from a post-translocation (POST) complex to a pre-translocation (PRE) complex, thus giving elongation factor G a second chance to translocate the tRNAs correctly. Binds to ribosomes in a GTP-dependent manner. The polypeptide is Elongation factor 4 (Methylorubrum extorquens (strain CM4 / NCIMB 13688) (Methylobacterium extorquens)).